Here is a 429-residue protein sequence, read N- to C-terminus: MNQTCKVCGEPAAGFHFGAFTCEGCKSFFGRSYNNISTISECKNEGKCIIDKKNRTTCKACRLRKCYNVGMSKGGSRYGRRSNWFKIHCLLQEHEQAAAAAGKAPPLAGGVSVGGAPSASSPVGSPHTPGFGDMAAHLHHHHQQQQQQQVPRHPHMPLLGYPSYLSDPSAALPFFSMMGGVPHQSPFQLPPHLLFPGYHASAAAAAASAADAAYRQEMYKHRQSVDSVESQNRFSPASQPPVVQPTSSARQSPIDVCLEEDVHSVHSHQSSASLLHPIAIRATPTTPTSSSPLSFAAKMQSLSPVSVCSIGGETTSVVPVHPPTVSAQEGPMDLSMKTSRSSVHSFNDSGSEDQEVEVAPRRKFYQLEAECLTTSSSSSSHSAAHSPNTTTAHAEVKRQKLGGAEATHFGGFAVAHNAASAMRGIFVCV.

Residues 2–78 (NQTCKVCGEP…VGMSKGGSRY (77 aa)) constitute a DNA-binding region (nuclear receptor). NR C4-type zinc fingers lie at residues 5 to 25 (CKVC…CEGC) and 42 to 66 (CKNE…LRKC). The span at 112–126 (SVGGAPSASSPVGSP) shows a compositional bias: low complexity. Disordered regions lie at residues 112–148 (SVGG…QQQQ), 223–250 (QSVD…SSAR), 338–357 (TSRS…QEVE), and 375–397 (SSSS…AEVK). Composition is skewed to polar residues over residues 225 to 237 (VDSV…FSPA) and 338 to 349 (TSRSSVHSFNDS). Low complexity predominate over residues 375–393 (SSSSSSHSAAHSPNTTTAH).

It belongs to the nuclear hormone receptor family. NR0 subfamily.

Its subcellular location is the nucleus. Its function is as follows. Transcriptional repressor. Binds to multiple sites in the eve stripe 3 enhancer element. Plays an essential role in the segmentation process both by refining the expression patterns of gap genes and by establishing pair-rules stripes of gene expression. In Drosophila melanogaster (Fruit fly), this protein is Zygotic gap protein knirps (kni).